We begin with the raw amino-acid sequence, 200 residues long: Glutathione S-transferase 1-1 (200 aa).

A GST N-terminal domain is found at 1 to 73 (GSSPCRSVIM…YLVEKYGKTD (73 aa)). Glutathione is bound by residues Ser2, 43–45 (HTI), and 57–59 (ESR). In terms of domain architecture, GST C-terminal spans 79-200 (CPKKRAVINQ…AGCLEFKKYF (122 aa)).

It belongs to the GST superfamily. Theta family. Homodimer.

It carries out the reaction RX + glutathione = an S-substituted glutathione + a halide anion + H(+). It catalyses the reaction 1,1,1-trichloro-2,2-bis(4-chlorophenyl)ethane = 1,1-dichloro-2,2-bis(4-chlorophenyl)ethylene + chloride + H(+). In terms of biological role, conjugation of reduced glutathione to a wide number of exogenous and endogenous hydrophobic electrophiles. Has DDT dehydrochlorinase activity. The polypeptide is Glutathione S-transferase 1-1 (GstD1) (Drosophila teissieri (Fruit fly)).